The following is a 152-amino-acid chain: Peptide deformylase (152 aa).

Residues cysteine 88 and histidine 130 each coordinate Fe cation. The active site involves glutamate 131. Histidine 134 lines the Fe cation pocket.

Belongs to the polypeptide deformylase family. The cofactor is Fe(2+).

It catalyses the reaction N-terminal N-formyl-L-methionyl-[peptide] + H2O = N-terminal L-methionyl-[peptide] + formate. Functionally, removes the formyl group from the N-terminal Met of newly synthesized proteins. Requires at least a dipeptide for an efficient rate of reaction. N-terminal L-methionine is a prerequisite for activity but the enzyme has broad specificity at other positions. The protein is Peptide deformylase of Syntrophomonas wolfei subsp. wolfei (strain DSM 2245B / Goettingen).